The primary structure comprises 190 residues: Carbonic anhydrase 2 (190 aa).

It belongs to the beta-class carbonic anhydrase family. In terms of assembly, homohexamer.

It is found in the cytoplasm. It carries out the reaction hydrogencarbonate + H(+) = CO2 + H2O. Functionally, reversible hydration of carbon dioxide. This chain is Carbonic anhydrase 2, found in Flaveria linearis (Narrowleaf yellowtops).